The following is a 403-amino-acid chain: Queuine tRNA-ribosyltransferase catalytic subunit 1 (403 aa).

A2 carries the N-acetylalanine modification. D105 acts as the Proton acceptor in catalysis. 105–109 provides a ligand contact to queuine; the sequence is DSGGF. At S139 the chain carries Phosphoserine. D159, Q202, and G229 together coordinate queuine. Residues 260–266 are RNA binding; it reads GVGYATD. D279 (nucleophile) is an active-site residue. The RNA binding; important for wobble base 34 recognition stretch occupies residues 284 to 288; that stretch reads TRTAR. C317, C319, C322, and H348 together coordinate Zn(2+).

This sequence belongs to the queuine tRNA-ribosyltransferase family. As to quaternary structure, heterodimer of a catalytic subunit QTRT1 and an accessory subunit QTRT2. It depends on Zn(2+) as a cofactor.

It is found in the cytoplasm. It localises to the mitochondrion outer membrane. It catalyses the reaction guanosine(34) in tRNA + queuine = queuosine(34) in tRNA + guanine. Functionally, catalytic subunit of the queuine tRNA-ribosyltransferase (TGT) that catalyzes the base-exchange of a guanine (G) residue with queuine (Q) at position 34 (anticodon wobble position) in tRNAs with GU(N) anticodons (tRNA-Asp, -Asn, -His and -Tyr), resulting in the hypermodified nucleoside queuosine (7-(((4,5-cis-dihydroxy-2-cyclopenten-1-yl)amino)methyl)-7-deazaguanosine). Catalysis occurs through a double-displacement mechanism. The nucleophile active site attacks the C1' of nucleotide 34 to detach the guanine base from the RNA, forming a covalent enzyme-RNA intermediate. The proton acceptor active site deprotonates the incoming queuine, allowing a nucleophilic attack on the C1' of the ribose to form the product. This chain is Queuine tRNA-ribosyltransferase catalytic subunit 1, found in Rattus norvegicus (Rat).